Consider the following 93-residue polypeptide: U12-lycotoxin-Ls1a (93 aa).

Positions 1–18 are cleaved as a signal peptide; it reads MKFAVILLFSLVVLAVAS. The propeptide occupies 19 to 38; it reads ESVEEVRREIDIEDLPEQQR.

Belongs to the neurotoxin 31 family. Post-translationally, contains 5 disulfide bonds. Expressed by the venom gland.

The protein resides in the secreted. The chain is U12-lycotoxin-Ls1a from Lycosa singoriensis (Wolf spider).